Reading from the N-terminus, the 103-residue chain is Large ribosomal subunit protein uL24 (103 aa).

It belongs to the universal ribosomal protein uL24 family. In terms of assembly, part of the 50S ribosomal subunit.

Functionally, one of two assembly initiator proteins, it binds directly to the 5'-end of the 23S rRNA, where it nucleates assembly of the 50S subunit. Its function is as follows. One of the proteins that surrounds the polypeptide exit tunnel on the outside of the subunit. In Bacillus anthracis (strain A0248), this protein is Large ribosomal subunit protein uL24.